A 153-amino-acid chain; its full sequence is 3-hydroxyacyl-[acyl-carrier-protein] dehydratase FabZ (153 aa).

Residue H47 is part of the active site.

The protein belongs to the thioester dehydratase family. FabZ subfamily.

The protein localises to the cytoplasm. It catalyses the reaction a (3R)-hydroxyacyl-[ACP] = a (2E)-enoyl-[ACP] + H2O. Its function is as follows. Involved in unsaturated fatty acids biosynthesis. Catalyzes the dehydration of short chain beta-hydroxyacyl-ACPs and long chain saturated and unsaturated beta-hydroxyacyl-ACPs. This is 3-hydroxyacyl-[acyl-carrier-protein] dehydratase FabZ from Dichelobacter nodosus (strain VCS1703A).